Here is a 282-residue protein sequence, read N- to C-terminus: Pantothenate synthetase (282 aa).

Residue 30–37 (MGYLHEGH) coordinates ATP. The Proton donor role is filled by histidine 37. Glutamine 61 is a binding site for (R)-pantoate. A beta-alanine-binding site is contributed by glutamine 61. 147-150 (GMKD) provides a ligand contact to ATP. Position 153 (glutamine 153) interacts with (R)-pantoate. Residues valine 176 and 184–187 (KSSR) contribute to the ATP site.

Belongs to the pantothenate synthetase family. As to quaternary structure, homodimer.

The protein localises to the cytoplasm. It catalyses the reaction (R)-pantoate + beta-alanine + ATP = (R)-pantothenate + AMP + diphosphate + H(+). It functions in the pathway cofactor biosynthesis; (R)-pantothenate biosynthesis; (R)-pantothenate from (R)-pantoate and beta-alanine: step 1/1. Catalyzes the condensation of pantoate with beta-alanine in an ATP-dependent reaction via a pantoyl-adenylate intermediate. The polypeptide is Pantothenate synthetase (Bacillus thuringiensis (strain Al Hakam)).